Consider the following 357-residue polypeptide: UDP-N-acetylglucosamine--N-acetylmuramyl-(pentapeptide) pyrophosphoryl-undecaprenol N-acetylglucosamine transferase (357 aa).

UDP-N-acetyl-alpha-D-glucosamine contacts are provided by residues 13–15 (TGG), asparagine 122, arginine 163, serine 191, and glutamine 288.

It belongs to the glycosyltransferase 28 family. MurG subfamily.

It is found in the cell inner membrane. It catalyses the reaction di-trans,octa-cis-undecaprenyl diphospho-N-acetyl-alpha-D-muramoyl-L-alanyl-D-glutamyl-meso-2,6-diaminopimeloyl-D-alanyl-D-alanine + UDP-N-acetyl-alpha-D-glucosamine = di-trans,octa-cis-undecaprenyl diphospho-[N-acetyl-alpha-D-glucosaminyl-(1-&gt;4)]-N-acetyl-alpha-D-muramoyl-L-alanyl-D-glutamyl-meso-2,6-diaminopimeloyl-D-alanyl-D-alanine + UDP + H(+). It functions in the pathway cell wall biogenesis; peptidoglycan biosynthesis. Cell wall formation. Catalyzes the transfer of a GlcNAc subunit on undecaprenyl-pyrophosphoryl-MurNAc-pentapeptide (lipid intermediate I) to form undecaprenyl-pyrophosphoryl-MurNAc-(pentapeptide)GlcNAc (lipid intermediate II). The chain is UDP-N-acetylglucosamine--N-acetylmuramyl-(pentapeptide) pyrophosphoryl-undecaprenol N-acetylglucosamine transferase from Gloeobacter violaceus (strain ATCC 29082 / PCC 7421).